The chain runs to 526 residues: Vang-like protein 2 (526 aa).

The disordered stretch occupies residues 1–95; it reads MDNESQYSGY…NEDLTRASKE (95 aa). At 1–109 the chain is on the cytoplasmic side; sequence MDNESQYSGY…SPLECRRFAG (109 aa). The span at 15-33 shows a compositional bias: basic residues; sequence SHSRSSRKHRDRRDRHRSK. 2 stretches are compositionally biased toward basic and acidic residues: residues 34 to 43 and 58 to 68; these read SRDSSSRGDK and ESTRGDDRDDN. Positions 70 to 83 are enriched in low complexity; that stretch reads GETTTVVTGTSEHS. The span at 84-95 shows a compositional bias: basic and acidic residues; sequence VSNEDLTRASKE. Residues 110-130 form a helical membrane-spanning segment; sequence PIVSGVLGLFALLTPLAFLLL. The Extracellular segment spans residues 131-148; it reads PQLLWRDSLEPCGTPCEG. Residues 149-169 traverse the membrane as a helical segment; that stretch reads LYVSLAFKLLVLLISSWALFL. Residues 170–178 lie on the Cytoplasmic side of the membrane; that stretch reads RPSRSTLPR. The chain crosses the membrane as a helical span at residues 179–199; it reads FFVFRCLLMALVFLFVASYWL. Topologically, residues 200–215 are extracellular; that stretch reads FYGVRVLEPRERDYRG. A helical transmembrane segment spans residues 216–236; it reads IVGYAVSLVDALLFIQYLALV. The Cytoplasmic portion of the chain corresponds to 237–526; it reads LLEVRHLRPA…VMRLQSETSV (290 aa). The PDZ-binding signature appears at 523 to 526; that stretch reads ETSV.

Belongs to the Vang family. In terms of assembly, interacts with the PDZ domain of dvl2/dsh. As to expression, ubiquitously expressed at the 4-cell stage. In early somitogenesis, becomes more abundant in anterior neural tissue where expression is seen in the neural tube but not in the notochord.

The protein localises to the cell membrane. Its function is as follows. Plays a role in non-canonical Wnt/planar cell polarity (PCP) signaling to regulate convergent extension cell movements during gastrulation. Acts together with scrib and prickle1 and localizes prickle1 and dvl2/dsh to the plasma membrane. Has an overlapping role with kny during both convergent extension and eye development. In the eye, involved in establishing proper alignment of the anterior neural plate and midline cells expressing shha and shhb/twhh. Has indirect effects on a number of other developmental processes including notochord shape formation, neural progenitor cell morphogenesis, segregation of somites and adaxial cell development. Together with prickle1, required for the posterior (caudal) movement of branchiomotor neurons in the hindbrain independently of, and a few hours after, convergent extension. May be required for cell surface localization of fzd3 and fzd6 in the inner ear. This chain is Vang-like protein 2, found in Danio rerio (Zebrafish).